We begin with the raw amino-acid sequence, 325 residues long: Melanocortin receptor 5 (325 aa).

Topologically, residues 1–37 (MNSSSTLTVLNLTLNASEDGILGSNVKNKSLACEEMG) are extracellular. N-linked (GlcNAc...) asparagine glycans are attached at residues Asn-2, Asn-11, Asn-15, and Asn-28. The chain crosses the membrane as a helical span at residues 38–61 (IAVEVFLTLGLVSLLENILVIGAI). At 62–73 (VKNKNLHSPMYF) the chain is on the cytoplasmic side. A helical membrane pass occupies residues 74–97 (FVGSLAVADMLVSMSNAWETVTIY). Topologically, residues 98–114 (LLNNKHLVIADTFVRHI) are extracellular. Residues 115–138 (DNVFDSMICISVVASMCSLLAIAV) traverse the membrane as a helical segment. The Cytoplasmic portion of the chain corresponds to 139 to 155 (DRYITIFYALRYHHIMT). The chain crosses the membrane as a helical span at residues 156-179 (ARRSGVIIACIWTFCISCGIVFII). Residues 180–186 (YYESKYV) are Extracellular-facing. A helical membrane pass occupies residues 187–211 (IICLISMFFTMLFFMVSLYIHMFLL). The Cytoplasmic segment spans residues 212–239 (ARNHVKRIAASPRYNSVRQRTSMKGAIT). Residues 240–265 (LTMLLGIFIVCWSPFFLHLILMISCP) traverse the membrane as a helical segment. The Extracellular portion of the chain corresponds to 266 to 273 (QNVYCSCF). A helical membrane pass occupies residues 274 to 297 (MSYFNMYLILIMCNSVIDPLIYAL). At 298–325 (RSQEMRRTFKEIVCCHGFRRPCRLLGGY) the chain is on the cytoplasmic side. S-palmitoyl cysteine attachment occurs at residues Cys-311 and Cys-312.

It belongs to the G-protein coupled receptor 1 family. In terms of tissue distribution, skin, adrenal gland, skeletal muscle, bone marrow, spleen, thymus, gonads, uterus and brain.

It localises to the cell membrane. Receptor for MSH (alpha, beta and gamma) and ACTH. The activity of this receptor is mediated by G proteins which activate adenylate cyclase. This receptor is a possible mediator of the immunomodulation properties of melanocortins. In Mus musculus (Mouse), this protein is Melanocortin receptor 5 (Mc5r).